We begin with the raw amino-acid sequence, 96 residues long: Evasin P1078 (96 aa).

Residues 1-28 form the signal peptide; it reads MAFNTITFLQWAVFVAILFNMNLHSASA. Cystine bridges form between cysteine 48–cysteine 67, cysteine 52–cysteine 69, and cysteine 63–cysteine 80. N-linked (GlcNAc...) asparagine glycosylation is present at asparagine 51. Residue asparagine 74 is glycosylated (N-linked (GlcNAc...) asparagine).

Its subcellular location is the secreted. Functionally, salivary chemokine-binding protein which binds to host chemokines CXCL1, CXCL2, CXCL3, CXCL5, CXCL6, CXCL11 and CXCL13. The sequence is that of Evasin P1078 from Ixodes ricinus (Common tick).